The primary structure comprises 123 residues: Small ribosomal subunit protein bS16 (123 aa).

Residues 87–123 form a disordered region; sequence AKNNPIKAKPGKRAQERAAEKAQKAADAAAAAADAAE. The segment covering 99–110 has biased composition (basic and acidic residues); the sequence is RAQERAAEKAQK. A compositionally biased stretch (low complexity) spans 111 to 123; that stretch reads AADAAAAAADAAE.

The protein belongs to the bacterial ribosomal protein bS16 family.

This is Small ribosomal subunit protein bS16 from Rhizobium etli (strain CIAT 652).